The following is a 144-amino-acid chain: uncharacterized protein (144 aa).

4 helical membrane-spanning segments follow: residues 16-36, 48-68, 87-107, and 120-140; these read FLIF…GAIF, GFIV…ALII, LLPE…LVLL, and VMSL…WYFG.

It is found in the cell membrane. This is an uncharacterized protein from Methanocaldococcus jannaschii (strain ATCC 43067 / DSM 2661 / JAL-1 / JCM 10045 / NBRC 100440) (Methanococcus jannaschii).